Consider the following 303-residue polypeptide: Cytosolic Fe-S cluster assembly factor CFD1 (303 aa).

15–22 (GKGGVGKS) contributes to the ATP binding site. Cys-199 and Cys-202 together coordinate [4Fe-4S] cluster.

It belongs to the Mrp/NBP35 ATP-binding proteins family. NUBP2/CFD1 subfamily. Heterotetramer of 2 NBP35 and 2 CFD1 chains. Requires [4Fe-4S] cluster as cofactor.

Its subcellular location is the cytoplasm. In terms of biological role, component of the cytosolic iron-sulfur (Fe/S) protein assembly (CIA) machinery. Required for maturation of extramitochondrial Fe-S proteins. The NBP35-CFD1 heterotetramer forms a Fe-S scaffold complex, mediating the de novo assembly of an Fe-S cluster and its transfer to target apoproteins. In Chaetomium globosum (strain ATCC 6205 / CBS 148.51 / DSM 1962 / NBRC 6347 / NRRL 1970) (Soil fungus), this protein is Cytosolic Fe-S cluster assembly factor CFD1.